A 699-amino-acid polypeptide reads, in one-letter code: Cysteine--tRNA ligase (699 aa).

The segment at 1–226 (MTTITEKRLT…SEQQRLIHNP (226 aa)) is unknown. Cysteine 254 provides a ligand contact to Zn(2+). A 'HIGH' region motif is present at residues 256-266 (MTVYDYCHLGH). Zn(2+) is bound by residues cysteine 435, histidine 460, and glutamate 464. Residues 508 to 512 (KMSKS) carry the 'KMSKS' region motif. Lysine 511 contacts ATP.

It belongs to the class-I aminoacyl-tRNA synthetase family. As to quaternary structure, monomer. Zn(2+) serves as cofactor.

The protein resides in the cytoplasm. The enzyme catalyses tRNA(Cys) + L-cysteine + ATP = L-cysteinyl-tRNA(Cys) + AMP + diphosphate. This chain is Cysteine--tRNA ligase (cysS), found in Neisseria meningitidis serogroup A / serotype 4A (strain DSM 15465 / Z2491).